Here is a 100-residue protein sequence, read N- to C-terminus: Small ribosomal subunit protein uS14c (100 aa).

The protein belongs to the universal ribosomal protein uS14 family. In terms of assembly, part of the 30S ribosomal subunit.

The protein resides in the plastid. Its function is as follows. Binds 16S rRNA, required for the assembly of 30S particles. The chain is Small ribosomal subunit protein uS14c from Euglena longa (Euglenophycean alga).